The primary structure comprises 128 residues: Entry-fusion complex protein OPG094 (128 aa).

Over 1–30 (MENVPNVYFNPVFIEPTFKHSLLSVYKHRL) the chain is Intravirion. The chain crosses the membrane as a helical; Signal-anchor for type III membrane protein span at residues 31–51 (IVLFEVFIVFILIYVFFRSEL). At 52-107 (NMFFMPKRKIPDPIDRLRRANLACEDDKLMIYGLPWMTTQTSALSINSKPIVYKDC) the chain is on the virion surface side. A disulfide bond links cysteine 75 and cysteine 107.

The protein belongs to the orthopoxvirus OPG099 family. In terms of assembly, interacts with OPG086. Component of the entry fusion complex (EFC) composed of OPG053, OPG076, OPG086, OPG094, OPG095, OPG099, OPG107, OPG143, OPG104J5, OPG147 and OPG155. Except for OPG095 and OPG053, each of the EFC proteins is required for assembly or stability of the complex. Post-translationally, most cysteines are linked by disulfide bonds. They are created by the viral disulfide bond formation pathway, a poxvirus-specific redox pathway that operates on the cytoplasmic side of the MV membranes. Unglycosylated because produced in viral factories instead of the classic ER -Golgi route.

It localises to the virion membrane. Functionally, component of the entry fusion complex (EFC), which consists of 11 proteins. During cell infection, this complex mediates entry of the virion core into the host cytoplasm by a two-step mechanism consisting of lipid mixing of the viral and cellular membranes and subsequent pore formation. This chain is Entry-fusion complex protein OPG094 (OPG099), found in Vaccinia virus (strain Ankara) (VACV).